Reading from the N-terminus, the 88-residue chain is Protein A19 homolog (88 aa).

The segment at 1–28 (MADSTAGAKKRKKRSTSATSTRKEPPTV) is disordered.

It belongs to the chordopoxvirinae A19 family.

In Fowlpox virus (strain NVSL) (FPV), this protein is Protein A19 homolog.